A 72-amino-acid chain; its full sequence is MEIGIVKWFNNAKGFGFISAEGVDADIFAHYSVIEMDGYRSLKAGQKVQFEVLHSDKGSHATKIIPIADTQE.

A CSD domain is found at 4–64; that stretch reads GIVKWFNNAK…SDKGSHATKI (61 aa).

It is found in the cytoplasm. The protein is Cold shock-like protein CspD (cspD) of Haemophilus influenzae (strain ATCC 51907 / DSM 11121 / KW20 / Rd).